The sequence spans 536 residues: Heparanase (536 aa).

A signal peptide spans 1–28; that stretch reads MLRPLLLLWLWGRLGALTQGTPAGTAPT. Residues 55-57 and T90 contribute to the heparan sulfate group site; that span reads DAS. The propeptide at 103-150 is linker peptide; that stretch reads PTSEERSYWQSQDNNDICGSERVSADVLRKLQMEWPFQELLLLREQYQ. Residues C120 and C172 are joined by a disulfide bond. 151–155 contributes to the heparan sulfate group binding site; the sequence is REFKN. N-linked (GlcNAc...) asparagine glycans are attached at residues N155, N193, and N210. Catalysis depends on E218, which acts as the Proton donor. Residues 263–273, H289, and R296 each bind heparan sulfate group; that span reads QPRGKTVKLLR. Positions 281–410 are required for heterodimerization with the heparanase 8 kDa subunit; the sequence is EVIDSLTWHH…LLFKKLVGPK (130 aa). E336 functions as the Nucleophile in the catalytic mechanism. Heparan sulfate group-binding positions include 341–343 and 382–384; these read YGG and GNY. A disulfide bond links C430 and C535. The N-linked (GlcNAc...) asparagine glycan is linked to N452. Residues 520 to 536 form a required for transferring proheparanase to the Golgi apparatus, secretion and subsequent enzyme activity and for enhancement of PKB/AKT1 phosphorylation region; sequence FSYGFFVIRNAKIAACI.

It belongs to the glycosyl hydrolase 79 family. Heterodimer; heterodimer formation between the 8 kDa and the 50 kDa subunits is required for enzyme activity. Interacts with TF; the interaction, inhibited by heparin, enhances the generation of activated factor X and activates coagulation. Interacts with HRG; the interaction is enhanced at acidic pH, partially inhibits binding of HPSE to cell surface receptors and modulates its enzymatic activity. Interacts with SDC1; the interaction enhances the shedding of SDC1. Interacts with HPSE2. Post-translationally, proteolytically processed. The cleavage of the 65 kDa form leads to the generation of a linker peptide, and the 8 kDa and 50 kDa products. The active form, the 8/50 kDa heterodimer, is resistant to degradation. Complete removal of the linker peptide appears to be a prerequisite to the complete activation of the enzyme. N-glycosylated. Glycosylation of the 50 kDa subunit appears to be essential for its solubility.

The protein resides in the lysosome membrane. It localises to the secreted. It is found in the nucleus. The enzyme catalyses endohydrolysis of (1-&gt;4)-beta-D-glycosidic bonds of heparan sulfate chains in heparan sulfate proteoglycan.. Inhibited by laminarin sulfate and, to a lower extent, by heparin and sulfamin. Activated by calcium and magnesium. Inhibited by EDTA. Functionally, endoglycosidase that cleaves heparan sulfate proteoglycans (HSPGs) into heparan sulfate side chains and core proteoglycans. Participates in extracellular matrix (ECM) degradation and remodeling. Selectively cleaves the linkage between a glucuronic acid unit and an N-sulfo glucosamine unit carrying either a 3-O-sulfo or a 6-O-sulfo group. Can also cleave the linkage between a glucuronic acid unit and an N-sulfo glucosamine unit carrying a 2-O-sulfo group, but not linkages between a glucuronic acid unit and a 2-O-sulfated iduronic acid moiety. It is essentially inactive at neutral pH but becomes active under acidic conditions such as during tumor invasion and in inflammatory processes. Facilitates cell migration associated with metastasis, wound healing and inflammation. Enhances shedding of syndecans, and increases endothelial invasion and angiogenesis in myelomas. Acts as a procoagulant by increasing the generation of activation factor X in the presence of tissue factor and activation factor VII. Increases cell adhesion to the extracellular matrix (ECM), independent of its enzymatic activity. Induces AKT1/PKB phosphorylation via lipid rafts increasing cell mobility and invasion. Heparin increases this AKT1/PKB activation. Regulates osteogenesis. Enhances angiogenesis through up-regulation of SRC-mediated activation of VEGF. Implicated in hair follicle inner root sheath differentiation and hair homeostasis. This chain is Heparanase (Hpse), found in Rattus norvegicus (Rat).